Here is a 639-residue protein sequence, read N- to C-terminus: uncharacterized protein (639 aa).

This is an uncharacterized protein from Mus musculus (Mouse).